Here is a 436-residue protein sequence, read N- to C-terminus: Arginine-hydroxylase NDUFAF5, mitochondrial (436 aa).

A mitochondrion-targeting transit peptide spans 1–25 (MLRTTFRKGFNLKCFSKDWNQTRQY). The tract at residues 365–436 (VTLSQQQQQQ…DEINKNKDDK (72 aa)) is disordered. The span at 369 to 380 (QQQQQQGIEPQQ) shows a compositional bias: low complexity. Composition is skewed to basic and acidic residues over residues 391–411 (PKTD…HFEK) and 421–436 (QNKE…KDDK).

Belongs to the methyltransferase superfamily.

The protein localises to the mitochondrion. Involved in the assembly of mitochondrial NADH:ubiquinone oxidoreductase complex (complex I, MT-ND1) at early stages. Probably acts as an arginine hydroxylase. May also have methyltransferase activity. The protein is Arginine-hydroxylase NDUFAF5, mitochondrial of Dictyostelium discoideum (Social amoeba).